The primary structure comprises 245 residues: 1-(5-phosphoribosyl)-5-[(5-phosphoribosylamino)methylideneamino] imidazole-4-carboxamide isomerase (245 aa).

D15 (proton acceptor) is an active-site residue. D135 serves as the catalytic Proton donor.

Belongs to the HisA/HisF family.

The protein localises to the cytoplasm. The enzyme catalyses 1-(5-phospho-beta-D-ribosyl)-5-[(5-phospho-beta-D-ribosylamino)methylideneamino]imidazole-4-carboxamide = 5-[(5-phospho-1-deoxy-D-ribulos-1-ylimino)methylamino]-1-(5-phospho-beta-D-ribosyl)imidazole-4-carboxamide. The protein operates within amino-acid biosynthesis; L-histidine biosynthesis; L-histidine from 5-phospho-alpha-D-ribose 1-diphosphate: step 4/9. The protein is 1-(5-phosphoribosyl)-5-[(5-phosphoribosylamino)methylideneamino] imidazole-4-carboxamide isomerase of Haloquadratum walsbyi (strain DSM 16790 / HBSQ001).